The primary structure comprises 381 residues: tRNA pseudouridine synthase D (381 aa).

Residue D81 is the Nucleophile of the active site. The TRUD domain maps to 160 to 335 (GMPNYFGSQR…TLGSRRFFWV (176 aa)).

This sequence belongs to the pseudouridine synthase TruD family.

It carries out the reaction uridine(13) in tRNA = pseudouridine(13) in tRNA. Functionally, responsible for synthesis of pseudouridine from uracil-13 in transfer RNAs. The protein is tRNA pseudouridine synthase D of Helicobacter pylori (strain HPAG1).